The sequence spans 264 residues: Ribonuclease HII (264 aa).

One can recognise an RNase H type-2 domain in the interval 33–224; that stretch reads GPVAGVDEVG…VRRVASGSNT (192 aa). Positions 39, 40, and 133 each coordinate a divalent metal cation. The disordered stretch occupies residues 222–264; it reads SNTAEVADGQPDPRDGTAQTGEGRWSKSSHPATMRATGRAQGT.

The protein belongs to the RNase HII family. The cofactor is Mn(2+). Mg(2+) serves as cofactor.

It is found in the cytoplasm. It catalyses the reaction Endonucleolytic cleavage to 5'-phosphomonoester.. Functionally, endonuclease that specifically degrades the RNA of RNA-DNA hybrids. This chain is Ribonuclease HII, found in Mycobacterium bovis (strain BCG / Pasteur 1173P2).